Reading from the N-terminus, the 115-residue chain is U3-lycotoxin-Ls1a (115 aa).

A signal peptide spans 1–20 (MKFVLLFGVLLVTFFSYSSA). A propeptide spanning residues 21–44 (EMLDDFDQADEDELLSLIEKGEAR) is cleaved from the precursor. Cystine bridges form between Cys-48-Cys-63, Cys-55-Cys-72, Cys-62-Cys-87, and Cys-74-Cys-85.

This sequence belongs to the neurotoxin 19 (CSTX) family. 01 subfamily. In terms of tissue distribution, expressed by the venom gland.

It localises to the secreted. This chain is U3-lycotoxin-Ls1a, found in Lycosa singoriensis (Wolf spider).